The chain runs to 207 residues: Peptidyl-tRNA hydrolase (207 aa).

Tyr-19 contacts tRNA. The active-site Proton acceptor is His-24. TRNA-binding residues include Phe-70, Asn-72, and Asn-118.

This sequence belongs to the PTH family. As to quaternary structure, monomer.

It is found in the cytoplasm. The catalysed reaction is an N-acyl-L-alpha-aminoacyl-tRNA + H2O = an N-acyl-L-amino acid + a tRNA + H(+). Its function is as follows. Hydrolyzes ribosome-free peptidyl-tRNAs (with 1 or more amino acids incorporated), which drop off the ribosome during protein synthesis, or as a result of ribosome stalling. Catalyzes the release of premature peptidyl moieties from peptidyl-tRNA molecules trapped in stalled 50S ribosomal subunits, and thus maintains levels of free tRNAs and 50S ribosomes. In Synechococcus sp. (strain CC9311), this protein is Peptidyl-tRNA hydrolase.